The chain runs to 1284 residues: Neurexin-4 (1284 aa).

Residues 1–35 (MRPPRSNTKAAFSSLQFGLLCLLLLVNNGIKSVQA) form the signal peptide. Residues 36 to 1217 (DAFTDYFSDY…LRKAYNEVDS (1182 aa)) are Extracellular-facing. An F5/8 type C domain is found at 47 to 185 (CNQPLMERAV…ISMRVELYGC (139 aa)). The cysteines at positions 47 and 185 are disulfide-linked. Residues Asn-195, Asn-329, Asn-340, and Asn-398 are each glycosylated (N-linked (GlcNAc...) asparagine). A Laminin G-like 1 domain is found at 220–369 (FKTAFANGVM…FTRVNTIYAC (150 aa)). Residues Cys-333 and Cys-369 are joined by a disulfide bond. The region spanning 403 to 540 (FRTYEETGVM…CGDDVVVDAC (138 aa)) is the Laminin G-like 2 domain. Cystine bridges form between Cys-507–Cys-540, Cys-546–Cys-557, Cys-551–Cys-566, and Cys-568–Cys-578. Residues 542–579 (MIDRCNPNPCQHKGLCHQNSREFFCDCGHTGYAGAVCH) enclose the EGF-like 1 domain. N-linked (GlcNAc...) asparagine glycosylation occurs at Asn-668. Positions 824–962 (FRTTQENSVI…RGLYGISTGC (139 aa)) constitute a Laminin G-like 3 domain. Intrachain disulfides connect Cys-934/Cys-962, Cys-966/Cys-977, Cys-971/Cys-986, and Cys-988/Cys-998. The 38-residue stretch at 962 to 999 (CVGRCESNPCLNNGTCIERYDGYSCDCRWSAFKGPICA) folds into the EGF-like 2 domain. An N-linked (GlcNAc...) asparagine glycan is attached at Asn-974. Positions 1032–1183 (FTTTIPKGFL…LGTQLTEDFC (152 aa)) constitute a Laminin G-like 4 domain. N-linked (GlcNAc...) asparagine glycosylation is found at Asn-1047 and Asn-1137. Cys-1147 and Cys-1183 form a disulfide bridge. The helical transmembrane segment at 1218 to 1238 (VLLACLLVILFLLLILMFFLI) threads the bilayer. Over 1239–1284 (GRYLHRHKGDYLTHEDQGADGADDPDDAVLHSTTGHQVRKRTEIFI) the chain is Cytoplasmic.

Belongs to the neurexin family. Forms a complex with Nrg and Cont. Forms a complex composed of septa junction proteins Nrx-IV/Nrx, Tsf2/MTf, Cont and Nrg during late embryogenesis. The C-terminal region interacts with coracle. Interacts with Patj in cis form. In terms of tissue distribution, found in septate junctions of epithelial and glial cells.

The protein localises to the cell membrane. The protein resides in the cell junction. It localises to the septate junction. Seems to play a role in the formation and function of septate junctions. Septate junctions, which are the equivalent of vertebrates tight junctions, are characterized by regular arrays of transverse structures that span the intermembrane space and form a physical barrier to diffusion. Required for the blood-brain barrier formation. This Drosophila melanogaster (Fruit fly) protein is Neurexin-4 (Nrx-IV).